A 272-amino-acid polypeptide reads, in one-letter code: Ribosomal RNA large subunit methyltransferase E (272 aa).

The S-adenosyl-L-methionine site is built by G50, W52, D68, D84, and D109. Catalysis depends on K149, which acts as the Proton acceptor. The TRAM domain occupies 196 to 254 (PLRRGDKFVVDIEKLGSGGDGAVLIEGFVVFVKEVEVGEKVRIKIADVKPNFAFADVEE).

It belongs to the class I-like SAM-binding methyltransferase superfamily. RNA methyltransferase RlmE family.

It is found in the cytoplasm. The enzyme catalyses uridine(2552) in 23S rRNA + S-adenosyl-L-methionine = 2'-O-methyluridine(2552) in 23S rRNA + S-adenosyl-L-homocysteine + H(+). Specifically methylates the uridine in position 2552 of 23S rRNA at the 2'-O position of the ribose in the fully assembled 50S ribosomal subunit. The sequence is that of Ribosomal RNA large subunit methyltransferase E from Methanosarcina acetivorans (strain ATCC 35395 / DSM 2834 / JCM 12185 / C2A).